The sequence spans 383 residues: Na(+)/H(+) antiporter NhaA (383 aa).

11 helical membrane passes run 14-34 (AGGILLVIAAAIAMTIANSPL), 47-67 (FGMSVSHWINDGLMAVFFLLI), 87-107 (IFPAIAAVGGMLAPALIYVAF), 117-137 (GWAIPAATDIAFALGIIALLG), 146-166 (VFLLALAIIDDLGVVVIIALF), 171-191 (LSTMALLVGFIMTGVLFMLNA), 205-225 (AILWFAVLKSGVHATLAGVVI), 252-272 (VAFGILPLFAFANAGISLEGV), 280-300 (MLPLGIALGLLVGKPLGIFTF), 321-341 (IFAVSVLCGIGFTMSIFISSL), and 356-376 (LGILMGSTTAALLGYALLHFS).

It belongs to the NhaA Na(+)/H(+) (TC 2.A.33) antiporter family.

The protein resides in the cell inner membrane. The catalysed reaction is Na(+)(in) + 2 H(+)(out) = Na(+)(out) + 2 H(+)(in). In terms of biological role, na(+)/H(+) antiporter that extrudes sodium in exchange for external protons. The chain is Na(+)/H(+) antiporter NhaA from Vibrio alginolyticus.